Reading from the N-terminus, the 287-residue chain is MKNVLSIQSHVIYGHAGNSAAVFPMQRLGVNVWPLNTVQLSNHMQYGHWAGSAIDAAKMEQLVDGIAAIGALKRCDAVLSGFLGSPAQARAAVEIVRTVKATNPNAWYFCDPAMGQTGGIRPEPGVEEFIVAELPELADGMAPNHSELQKLAGQRIETVAEAVAACRSIIRRGPQVILVKHLHDRNSPADRFNMLVVTETEAWIGQRPLYAFPRHPVGVGDLTSAIFVARRLRGDSVRAAFEHTLAAVHAVVKATYDARRYELELVAAQDEIARPSEWFGAWVTGAD.

Substrate contacts are provided by residues Ser9 and 44 to 45; that span reads MQ. Asp111, Ala142, Glu147, and Lys180 together coordinate ATP. Residue Asp221 participates in substrate binding.

It belongs to the pyridoxine kinase family. PdxY subfamily. In terms of assembly, homodimer. Mg(2+) is required as a cofactor.

The enzyme catalyses pyridoxal + ATP = pyridoxal 5'-phosphate + ADP + H(+). It participates in cofactor metabolism; pyridoxal 5'-phosphate salvage; pyridoxal 5'-phosphate from pyridoxal: step 1/1. Functionally, pyridoxal kinase involved in the salvage pathway of pyridoxal 5'-phosphate (PLP). Catalyzes the phosphorylation of pyridoxal to PLP. The chain is Pyridoxal kinase PdxY from Burkholderia pseudomallei (strain K96243).